The sequence spans 359 residues: NAC transcription factor 47 (359 aa).

Positions 10 to 186 (LPPGFRFHPT…DWVLCRIYKK (177 aa)) constitute an NAC domain. A DNA-binding region spans residues 112-192 (IGIKKALVFY…IYKKSHASLS (81 aa)). Disordered stretches follow at residues 147-166 (KRINSSRSGGSEVNNNFGDR) and 200-226 (TSNQEHEENDNEPFVDRGTFLPNLQND). Residues 148-165 (RINSSRSGGSEVNNNFGD) show a composition bias toward polar residues.

It localises to the nucleus. Its function is as follows. Transcription factor that binds to the promoter of ACO5, an ACC oxidase involved in ethylene biosynthesis. Mediates waterlogging-induced hyponastic leaf movement, and cell expansion in abaxial cells of the basal petiole region, by directly regulating the expression of ACO5. Required for normal seed development and morphology. The chain is NAC transcription factor 47 from Arabidopsis thaliana (Mouse-ear cress).